The primary structure comprises 895 residues: Probable methyltransferase PMT27 (895 aa).

The Cytoplasmic segment spans residues 1-16; sequence MAFGRGRGNKRTSTSS. A helical; Signal-anchor for type II membrane protein membrane pass occupies residues 17–37; sequence YASTITMVIFVALCVFGVWML. The Lumenal segment spans residues 38–895; sequence SSNSVIPPQI…KGFWRPETSQ (858 aa). A compositionally biased stretch (polar residues) spans 43–52; it reads IPPQITQGST. Residues 43–362 form a disordered region; it reads IPPQITQGST…QRQTSESNTV (320 aa). Over residues 90 to 114 the composition is skewed to basic and acidic residues; that stretch reads NPGKLPDDAVKSEDEQRKSAKEKSE. A compositionally biased stretch (low complexity) spans 115 to 127; it reads TTSSKTQTQETQQ. Basic and acidic residues predominate over residues 129–143; it reads NDDKISEEKEKDNGK. N145 carries N-linked (GlcNAc...) asparagine glycosylation. Residues 154-174 are compositionally biased toward basic and acidic residues; it reads GQMKKVVKEFEKEQKQQRDED. Residues 176 to 191 show a composition bias toward low complexity; that stretch reads GTQPKGTQGQEQGQGK. Composition is skewed to polar residues over residues 199–232 and 243–256; these read GNKQGQEQDSNTDVTFTDATKQEQPMETGQGETS and PEEQNSGNEETGQQ. Basic and acidic residues predominate over residues 257-320; it reads NEEKTTASEE…RKDEKKHEQG (64 aa). Residues 337–346 are compositionally biased toward polar residues; the sequence is SQKSWKSQAT. N375 and N709 each carry an N-linked (GlcNAc...) asparagine glycan.

It belongs to the methyltransferase superfamily.

The protein localises to the endoplasmic reticulum membrane. The polypeptide is Probable methyltransferase PMT27 (Arabidopsis thaliana (Mouse-ear cress)).